Consider the following 73-residue polypeptide: Aldehyde dehydrogenase (73 aa).

It belongs to the aldehyde dehydrogenase family.

It carries out the reaction an aldehyde + NAD(+) + H2O = a carboxylate + NADH + 2 H(+). Its pathway is alcohol metabolism; ethanol degradation; acetate from ethanol: step 2/2. The sequence is that of Aldehyde dehydrogenase from Geobacillus stearothermophilus (Bacillus stearothermophilus).